The following is a 706-amino-acid chain: Elongation factor G (706 aa).

Residues 8–297 form the tr-type G domain; the sequence is SYVRNIGIGA…AVVDYLPSPN (290 aa). GTP contacts are provided by residues 17 to 24, 95 to 99, and 149 to 152; these read AHIDAGKT, DTPGH, and NKMD.

This sequence belongs to the TRAFAC class translation factor GTPase superfamily. Classic translation factor GTPase family. EF-G/EF-2 subfamily.

The protein resides in the cytoplasm. Catalyzes the GTP-dependent ribosomal translocation step during translation elongation. During this step, the ribosome changes from the pre-translocational (PRE) to the post-translocational (POST) state as the newly formed A-site-bound peptidyl-tRNA and P-site-bound deacylated tRNA move to the P and E sites, respectively. Catalyzes the coordinated movement of the two tRNA molecules, the mRNA and conformational changes in the ribosome. This is Elongation factor G from Orientia tsutsugamushi (strain Ikeda) (Rickettsia tsutsugamushi).